A 391-amino-acid polypeptide reads, in one-letter code: Phosphoglycerate kinase (391 aa).

Substrate-binding positions include 21-23 (DLN), Arg-36, 59-62 (HLGR), Arg-113, and Arg-146. Residues Lys-197, Glu-319, and 345 to 348 (GGDT) contribute to the ATP site.

This sequence belongs to the phosphoglycerate kinase family. In terms of assembly, monomer.

The protein resides in the cytoplasm. It carries out the reaction (2R)-3-phosphoglycerate + ATP = (2R)-3-phospho-glyceroyl phosphate + ADP. It participates in carbohydrate degradation; glycolysis; pyruvate from D-glyceraldehyde 3-phosphate: step 2/5. This is Phosphoglycerate kinase from Shewanella halifaxensis (strain HAW-EB4).